The sequence spans 453 residues: MQGAQEASASEMLPLLLPLLWAGALAQERRFQLEGPESLTVQEGLCVLVPCRLPTTLPASYYGYGYWFLEGADVPVATNDPDEEVQEETRGRFHLLWDPRRKNCSLSIRDARRRDNAAYFFRLKSKWMKYGYTSSKLSVRVMALTHRPNISIPGTLESGHPSNLTCSVPWVCEQGTPPIFSWMSAAPTSLGPRTTQSSVLTITPRPQDHSTNLTCQVTFPGAGVTMERTIQLNVSYAPQKVAISIFQGNSAAFKILQNTSSLPVLEGQALRLLCDADGNPPAHLSWFQGFPALNATPISNTGVLELPQVGSAEEGDFTCRAQHPLGSLQISLSLFVHWKPEGRAGGVLGAVWGASITTLVFLCVCFIFRVKTRRKKAAQPVQNTDDVNPVMVSGSRGHQHQFQTGIVSDHPAEAGPISEDEQELHYAVLHFHKVQPQEPKVTDTEYSEIKIHK.

The first 26 residues, 1–26 (MQGAQEASASEMLPLLLPLLWAGALA), serve as a signal peptide directing secretion. At 27 to 347 (QERRFQLEGP…WKPEGRAGGV (321 aa)) the chain is on the extracellular side. The 96-residue stretch at 28–123 (ERRFQLEGPE…RDNAAYFFRL (96 aa)) folds into the Ig-like V-type domain. 3 disulfide bridges follow: Cys46/Cys172, Cys51/Cys104, and Cys166/Cys215. Asn103 carries N-linked (GlcNAc...) asparagine glycosylation. An N-acetylneuraminate-binding site is contributed by Arg122. The Ig-like C2-type 1 domain maps to 148-231 (PNISIPGTLE…AGVTMERTIQ (84 aa)). 2 N-linked (GlcNAc...) asparagine glycosylation sites follow: Asn149 and Asn163. Residue Asn233 is glycosylated (N-linked (GlcNAc...) asparagine). An Ig-like C2-type 2 domain is found at 238-333 (PQKVAISIFQ…PLGSLQISLS (96 aa)). Cysteines 274 and 319 form a disulfide. Residues 348 to 368 (LGAVWGASITTLVFLCVCFIF) traverse the membrane as a helical segment. Residues 369 to 453 (RVKTRRKKAA…TEYSEIKIHK (85 aa)) lie on the Cytoplasmic side of the membrane. The short motif at 424-429 (LHYAVL) is the ITIM motif element. The short motif at 444 to 449 (TEYSEI) is the SLAM-like motif element.

The protein belongs to the immunoglobulin superfamily. SIGLEC (sialic acid binding Ig-like lectin) family. As to quaternary structure, interacts with LEP. Expressed at high levels in placenta (cyto- and syncytiotrophoblastic cells) and at lower levels in spleen, peripheral blood leukocytes (predominantly B-cells) and small intestine.

The protein localises to the cell membrane. It is found in the secreted. Putative adhesion molecule that mediates sialic-acid dependent binding to cells. Binds to alpha-2,6-linked sialic acid. The sialic acid recognition site may be masked by cis interactions with sialic acids on the same cell surface. This Homo sapiens (Human) protein is Sialic acid-binding Ig-like lectin 6 (SIGLEC6).